Here is a 463-residue protein sequence, read N- to C-terminus: MATDLLYGLLPEHILLGLILVLMLLEILSVDKRAGSALFIASLLAGAGVLVMQLQTGYTADIVMNEIRIDRFSEIGRLIIVSCGAILGVYSLSSEAGHKYWILIASSLLGAMIILDSAGFISLFMGIEILSLPGFALMVLNNGKSTASEGSIKYLLLSSVATALVLFGLSLVYGSTGNLNISSFTAAVATGGVQNLAASVMILSGFFLKASVFPFHGWAPDAYSSARLPVTAFLASIVKAAVVLGLVRILGNAVLNPEAVTVIALLSMLSMFYGNITAIHQTAFKKMLAYSSISHAGYMMFALVDNTGARTEALLYYVAVYAVTTITACACFSILSGEDDNLDNLNGIFRKKPVAAILLSLCVLSLAGIPPLPGFLAKFFVFKTVIASGHLTVAVLAFVASYIGTFFYLGVVLRMFRSDAETVEQPANATCLCWTWGGALLGTLALALFMLLPNIFHWVMTGI.

A run of 14 helical transmembrane segments spans residues 5 to 25 (LLYGLLPEHILLGLILVLMLL), 34 to 54 (AGSALFIASLLAGAGVLVMQL), 72 to 92 (FSEIGRLIIVSCGAILGVYSL), 99 to 119 (KYWILIASSLLGAMIILDSAG), 120 to 140 (FISLFMGIEILSLPGFALMVL), 154 to 174 (YLLLSSVATALVLFGLSLVYG), 196 to 216 (LAASVMILSGFFLKASVFPFH), 230 to 250 (VTAFLASIVKAAVVLGLVRIL), 259 to 279 (AVTVIALLSMLSMFYGNITAI), 286 to 303 (KMLAYSSISHAGYMMFAL), 314 to 334 (LLYYVAVYAVTTITACACFSI), 356 to 376 (AILLSLCVLSLAGIPPLPGFL), 393 to 413 (VAVLAFVASYIGTFFYLGVVL), and 432 to 452 (LCWTWGGALLGTLALALFMLL).

It belongs to the complex I subunit 2 family. In terms of assembly, NDH-1 is composed of 14 different subunits. Subunits NuoA, H, J, K, L, M, N constitute the membrane sector of the complex.

It localises to the cell inner membrane. It carries out the reaction a quinone + NADH + 5 H(+)(in) = a quinol + NAD(+) + 4 H(+)(out). Functionally, NDH-1 shuttles electrons from NADH, via FMN and iron-sulfur (Fe-S) centers, to quinones in the respiratory chain. The immediate electron acceptor for the enzyme in this species is believed to be ubiquinone. Couples the redox reaction to proton translocation (for every two electrons transferred, four hydrogen ions are translocated across the cytoplasmic membrane), and thus conserves the redox energy in a proton gradient. The polypeptide is NADH-quinone oxidoreductase subunit N (Pelobacter propionicus (strain DSM 2379 / NBRC 103807 / OttBd1)).